Reading from the N-terminus, the 330-residue chain is ADP-L-glycero-D-manno-heptose-6-epimerase (330 aa).

NADP(+) contacts are provided by residues 11 to 12 (FI), 32 to 33 (DD), Q39, Q54, 75 to 79 (QGACA), and N92. Y139 functions as the Proton acceptor in the catalytic mechanism. K143 serves as a coordination point for NADP(+). A substrate-binding site is contributed by N168. NADP(+) is bound by residues V169 and K177. The active-site Proton acceptor is the K177. Residues R179, H186, 200-203 (FGEH), R213, and Y292 contribute to the substrate site.

Belongs to the NAD(P)-dependent epimerase/dehydratase family. HldD subfamily. In terms of assembly, homopentamer. Requires NADP(+) as cofactor.

It carries out the reaction ADP-D-glycero-beta-D-manno-heptose = ADP-L-glycero-beta-D-manno-heptose. It participates in nucleotide-sugar biosynthesis; ADP-L-glycero-beta-D-manno-heptose biosynthesis; ADP-L-glycero-beta-D-manno-heptose from D-glycero-beta-D-manno-heptose 7-phosphate: step 4/4. In terms of biological role, catalyzes the interconversion between ADP-D-glycero-beta-D-manno-heptose and ADP-L-glycero-beta-D-manno-heptose via an epimerization at carbon 6 of the heptose. This chain is ADP-L-glycero-D-manno-heptose-6-epimerase, found in Pseudomonas paraeruginosa (strain DSM 24068 / PA7) (Pseudomonas aeruginosa (strain PA7)).